We begin with the raw amino-acid sequence, 610 residues long: tRNA uridine 5-carboxymethylaminomethyl modification enzyme MnmG (610 aa).

An FAD-binding site is contributed by 14-19 (GAGHAG). 274–288 (GPRYCPSIEDKIVKF) lines the NAD(+) pocket.

Belongs to the MnmG family. In terms of assembly, homodimer. Heterotetramer of two MnmE and two MnmG subunits. The cofactor is FAD.

The protein localises to the cytoplasm. In terms of biological role, NAD-binding protein involved in the addition of a carboxymethylaminomethyl (cmnm) group at the wobble position (U34) of certain tRNAs, forming tRNA-cmnm(5)s(2)U34. The chain is tRNA uridine 5-carboxymethylaminomethyl modification enzyme MnmG from Chlamydia trachomatis serovar D (strain ATCC VR-885 / DSM 19411 / UW-3/Cx).